The primary structure comprises 214 residues: Protein get-1 (214 aa).

At 1–4 the chain is on the lumenal side; that stretch reads MPSL. The chain crosses the membrane as a helical span at residues 5–24; it reads LVVIFVIELFVQLVNTIGAA. Over 25–110 the chain is Cytoplasmic; sequence TINNLLWRIA…KFDRTLTTVR (86 aa). Residues 73–107 adopt a coiled-coil conformation; the sequence is KWARLRRQHDKLLEDLEKRKKELDAAKTKFDRTLT. The helical transmembrane segment at 111 to 131 threads the bilayer; sequence VVATRGLQWFLPFWYSREPMF. The Lumenal portion of the chain corresponds to 132–155; sequence WLPYGWFPYYVEWFASFPRAPLGS. The helical transmembrane segment at 156–172 threads the bilayer; that stretch reads VSIVVWQWACTGVIKLV. The Cytoplasmic portion of the chain corresponds to 173–214; it reads IETVMAVVGLIVAARQKQQEKQKAKQAVPAAGGGDSKAEEAK. Residues 190–214 are disordered; that stretch reads QQEKQKAKQAVPAAGGGDSKAEEAK.

Belongs to the WRB/GET1 family. Interacts with GET3.

The protein localises to the endoplasmic reticulum membrane. Required for the post-translational delivery of tail-anchored (TA) proteins to the endoplasmic reticulum. Acts as a membrane receptor for soluble GET3, which recognizes and selectively binds the transmembrane domain of TA proteins in the cytosol. The polypeptide is Protein get-1 (get-1) (Neurospora crassa (strain ATCC 24698 / 74-OR23-1A / CBS 708.71 / DSM 1257 / FGSC 987)).